The sequence spans 491 residues: MINLNDVSYKYNDTAAQAIQHISLSVKKGELVVITGKSGCGKTTLFRCVNGLCPRFYEGEITGSLTLNGKVLSSMRICDISNIAASVFQNPESQFFTTDVLSDLVYPCENCGIEKEEIQERLHRVTKLLSLEPLLNRKLSELSGGEKQKIAIASVLMLDTRVVLMDEPSSNLDYQSVELLTQILAQLKSKGYTLLIIEHRLHYLAELCDRLIVMENGSIVREYEKDLLCTIGNDEFHKQGLRGLHLFQNNSNTLITPQRQHTDKRLLTLHDIHFGYRKNTEVLKGIHLSIYPGDKIALIGKNGCGKTTLGKILCGLKKEQSGTVLLDGRSFPARVRSKTAGYVMQNVDFQLFGCSVYDDLLLGNEALPDKENRIQTVLEKLSLSALQEQHPTTLSMGQKQRLVVAASFLQNKRLTIFDEPTSGLDYGSMQNVCALIDSITGKTNASVIITHDYEFILNTCNRAVLLEDGQIKEDFQLNGSMQLEYIFKERL.

2 ABC transporter domains span residues 2 to 241 and 267 to 491; these read INLN…KQGL and LTLH…KERL. ATP contacts are provided by residues 36-43 and 300-307; these read GKSGCGKT and GKNGCGKT.

It belongs to the ABC transporter superfamily.

It is found in the cell inner membrane. Its function is as follows. Probably part of an ABC transporter complex. Responsible for energy coupling to the transport system. This is Putative ABC transporter ATP-binding protein TDE_0906 from Treponema denticola (strain ATCC 35405 / DSM 14222 / CIP 103919 / JCM 8153 / KCTC 15104).